Reading from the N-terminus, the 602-residue chain is Aspartate--tRNA(Asp/Asn) ligase (602 aa).

L-aspartate is bound at residue Glu-177. Residues 201–204 (QLFK) form an aspartate region. An L-aspartate-binding site is contributed by Arg-223. ATP-binding positions include 223–225 (RDE) and Gln-232. His-460 is an L-aspartate binding site. Residue Glu-497 participates in ATP binding. Residue Arg-504 coordinates L-aspartate. An ATP-binding site is contributed by 549 to 552 (GLDR).

It belongs to the class-II aminoacyl-tRNA synthetase family. Type 1 subfamily. As to quaternary structure, homodimer.

Its subcellular location is the cytoplasm. The enzyme catalyses tRNA(Asx) + L-aspartate + ATP = L-aspartyl-tRNA(Asx) + AMP + diphosphate. Aspartyl-tRNA synthetase with relaxed tRNA specificity since it is able to aspartylate not only its cognate tRNA(Asp) but also tRNA(Asn). Reaction proceeds in two steps: L-aspartate is first activated by ATP to form Asp-AMP and then transferred to the acceptor end of tRNA(Asp/Asn). The protein is Aspartate--tRNA(Asp/Asn) ligase of Prochlorococcus marinus (strain MIT 9515).